The following is an 86-amino-acid chain: Toxin CngtIV (86 aa).

A signal peptide spans 1–19 (MNSLLIITACLVLIGTVWA). One can recognise an LCN-type CS-alpha/beta domain in the interval 20 to 84 (KDGYLVDVKG…TWPLPNKRCG (65 aa)). Cystine bridges form between cysteine 30–cysteine 83, cysteine 34–cysteine 59, cysteine 43–cysteine 64, and cysteine 47–cysteine 66.

It belongs to the long (4 C-C) scorpion toxin superfamily. Sodium channel inhibitor family. Beta subfamily. As to expression, expressed by the venom gland.

The protein localises to the secreted. Functionally, beta toxins bind voltage-independently at site-4 of sodium channels (Nav) and shift the voltage of activation toward more negative potentials thereby affecting sodium channel activation and promoting spontaneous and repetitive firing. This chain is Toxin CngtIV, found in Centruroides noxius (Mexican scorpion).